The primary structure comprises 111 residues: uncharacterized protein (111 aa).

A coiled-coil region spans residues 3 to 29; the sequence is RKITSYKTSLQGLREENEDVELMNLNL. The region spanning 6-111 is the PPM-type phosphatase domain; the sequence is TSYKTSLQGL…TWWMYCSSYY (106 aa).

This is an uncharacterized protein from Acanthamoeba polyphaga mimivirus (APMV).